A 138-amino-acid polypeptide reads, in one-letter code: Enhancer of split malpha protein (138 aa).

It belongs to the M4-like protein family.

Functionally, part of the Notch signaling pathway. This chain is Enhancer of split malpha protein, found in Drosophila melanogaster (Fruit fly).